The following is a 271-amino-acid chain: (21S)-21-acetoxyl-apo-melianone synthase SDR (271 aa).

S150 acts as the Proton donor in catalysis. Y163 functions as the Proton acceptor in the catalytic mechanism. Catalysis depends on K167, which acts as the Proton donor/acceptor.

Belongs to the short-chain dehydrogenases/reductases (SDR) family. In terms of tissue distribution, mainly expressed in petioles.

It catalyses the reaction 21-O-acetyl-isomeliandiol + A = (21S)-21-acetoxyl-apo-melianone + AH2. It functions in the pathway secondary metabolite biosynthesis; terpenoid biosynthesis. Functionally, oxidoreductase involved in the biosynthesis of limonoids triterpene natural products such as azadirachtin, an antifeedant widely used as bioinsecticide, and possessing many medicinal applications including anti-tumoral, anti-malarial, anti-rheumatic, antibacterial, anti-inflammatory, anti-pyretic and diuretic effects. Catalyzes the oxidation of 21-O-acetyl-isomeliandiol to (21S)-21-acetoxyl-apo-melianone. This is (21S)-21-acetoxyl-apo-melianone synthase SDR from Melia azedarach (Chinaberry tree).